A 134-amino-acid polypeptide reads, in one-letter code: Profilin-3 (134 aa).

C13 and C118 are joined by a disulfide. The Involved in PIP2 interaction signature appears at 84–100 (AVIRGKKGSGGITIKKT). T114 is modified (phosphothreonine).

Belongs to the profilin family. Occurs in many kinds of cells as a complex with monomeric actin in a 1:1 ratio. Post-translationally, phosphorylated by MAP kinases.

It is found in the cytoplasm. The protein localises to the cytoskeleton. In terms of biological role, binds to actin and affects the structure of the cytoskeleton. At high concentrations, profilin prevents the polymerization of actin, whereas it enhances it at low concentrations. The protein is Profilin-3 of Olea europaea (Common olive).